The following is a 475-amino-acid chain: Aspartate ammonia-lyase (475 aa).

Residues threonine 104, serine 143, threonine 144, asparagine 145, threonine 190, and histidine 191 each coordinate L-aspartate. Positions 320-329 are SS loop; that stretch reads GSSIMPGKVN. Serine 321 (proton acceptor) is an active-site residue. 2 residues coordinate L-aspartate: serine 322 and lysine 327.

This sequence belongs to the class-II fumarase/aspartase family. Aspartase subfamily. Homotetramer.

The enzyme catalyses L-aspartate = fumarate + NH4(+). In terms of biological role, catalyzes the reversible conversion of L-aspartate to fumarate and ammonia. The polypeptide is Aspartate ammonia-lyase (Bacillus subtilis (strain 168)).